The following is an 89-amino-acid chain: MRQLPAGPSSLACSGCKAGRLVTVPFSSRDAEDQGSREGIGWQPPGRSWAHTTEQEGKHQVAKATVHPPGPDALLLNQVDPVQCCPTRL.

Residues 27–57 are disordered; the sequence is SSRDAEDQGSREGIGWQPPGRSWAHTTEQEG.

In terms of tissue distribution, isoform 1 or isoform 4 (T+ forms) are expressed at equal levels with isoform 2 or isoform 3 (T- forms) in brain.

Its function is as follows. Unknown for isoform 4. Csen is involved in calcium-dependent transcriptional repression, regulation of potassium channels, and perhaps in processing of PSEN2 and apoptosis. In Mus musculus (Mouse), this protein is Calsenilin isoform 4 (Kcnip3).